Reading from the N-terminus, the 551-residue chain is Arginine--tRNA ligase (551 aa).

The 'HIGH' region signature appears at 125–135; the sequence is ANPTGPLHIGH.

The protein belongs to the class-I aminoacyl-tRNA synthetase family. Monomer.

It is found in the cytoplasm. It carries out the reaction tRNA(Arg) + L-arginine + ATP = L-arginyl-tRNA(Arg) + AMP + diphosphate. This is Arginine--tRNA ligase from Nitratidesulfovibrio vulgaris (strain DSM 19637 / Miyazaki F) (Desulfovibrio vulgaris).